Reading from the N-terminus, the 260-residue chain is 3-methyl-2-oxobutanoate hydroxymethyltransferase (260 aa).

Residues Asp42 and Asp81 each contribute to the Mg(2+) site. 3-methyl-2-oxobutanoate is bound by residues 42–43 (DS), Asp81, and Lys109. Position 111 (Glu111) interacts with Mg(2+). Residue Glu178 is the Proton acceptor of the active site.

The protein belongs to the PanB family. As to quaternary structure, homodecamer; pentamer of dimers. It depends on Mg(2+) as a cofactor.

Its subcellular location is the cytoplasm. The enzyme catalyses 3-methyl-2-oxobutanoate + (6R)-5,10-methylene-5,6,7,8-tetrahydrofolate + H2O = 2-dehydropantoate + (6S)-5,6,7,8-tetrahydrofolate. It participates in cofactor biosynthesis; (R)-pantothenate biosynthesis; (R)-pantoate from 3-methyl-2-oxobutanoate: step 1/2. Functionally, catalyzes the reversible reaction in which hydroxymethyl group from 5,10-methylenetetrahydrofolate is transferred onto alpha-ketoisovalerate to form ketopantoate. This is 3-methyl-2-oxobutanoate hydroxymethyltransferase from Ruthia magnifica subsp. Calyptogena magnifica.